The primary structure comprises 499 residues: Chitinase B (499 aa).

The N-terminal stretch at methionine 1–alanine 41 is a signal peptide. The GH18 domain maps to lysine 42–alanine 425. Residues aspartate 68–alanine 69 and glycine 95–tyrosine 98 contribute to the chitin site. Residue glutamate 144 is the Proton donor of the active site. Residues tyrosine 145, methionine 212–aspartate 215, and tryptophan 403 each bind chitin. A Chitin-binding type-3 domain is found at leucine 438–leucine 498.

Belongs to the glycosyl hydrolase 18 family. Chitinase class II subfamily.

The enzyme catalyses Random endo-hydrolysis of N-acetyl-beta-D-glucosaminide (1-&gt;4)-beta-linkages in chitin and chitodextrins.. This Serratia marcescens protein is Chitinase B (chiB).